Reading from the N-terminus, the 157-residue chain is DNA gyrase inhibitor (157 aa).

This sequence belongs to the DNA gyrase inhibitor family. Interacts with DNA gyrase.

It is found in the cytoplasm. Inhibits the supercoiling activity of DNA gyrase. Acts by inhibiting DNA gyrase at an early step, prior to (or at the step of) binding of DNA by the gyrase. It protects cells against toxins that target DNA gyrase, by inhibiting activity of these toxins and reducing the formation of lethal double-strand breaks in the cell. The sequence is that of DNA gyrase inhibitor from Klebsiella pneumoniae (strain 342).